Here is a 650-residue protein sequence, read N- to C-terminus: MSTSLLKLTGITRRFTNGEQDVTVLKDINLTINQGEMVAIVGASGSGKSTLMNILGCLDKPSAGDYQVAGRAVGKLDNDQLAELRREHFGFIFQRYHLLGDLTALGNVEVPAIYAGKSRLARRQRAADLLTRLGLENRLHYRPSQLSGGQQQRVSIARALMNAGGIILADEPTGALDTHSGNEVLSILRDLHRQGNTVVIVTHDMTIAEHAQRVIELRDGEVIADRQTRPEEATASSPEAASSPATSALNQFKDRFIDAFKMALLAMNAQRMRTFLTMLGIIIGIASVVSVVALGKGSQEQVLANINSMGTSTLEIFPGKGFGDMDASAIQTLRASDIQPLTQQPYVHSVTPSVSTSVTMRYGNIAVSASISGVGEQFFTVRGYTLERGVLFPRSSVDELTQDAVIDKNTRDKLFPHGEDPIGQVILVGSLPVRIIGVVSKNQGGFGSDENLNVWVPYTTVMKRMVGQSYLKSITVRVKDNVDMSIAEQRITDLLMQRHGTKDFFIMNTDSIRQMIEKTTTTLTLLVSMIALISLLVGGIGVMNIMLVSVTERTREIGVRMAVGARTSDIMQQFLIEAVLVCLFGGIAGVALSLAIGVLFAQLSSNFAMIYSSSSIIAAFLCSSLIGIIFGFFPARRAARMEPIHALERE.

The region spanning 6-244 (LKLTGITRRF…ASSPEAASSP (239 aa)) is the ABC transporter domain. 42 to 49 (GASGSGKS) contributes to the ATP binding site. Residues 227–246 (QTRPEEATASSPEAASSPAT) form a disordered region. Low complexity predominate over residues 233-246 (ATASSPEAASSPAT). The next 4 membrane-spanning stretches (helical) occupy residues 275–295 (FLTM…VALG), 523–543 (LTLL…IGVM), 580–600 (LVCL…GVLF), and 615–635 (SIIA…FFPA).

Belongs to the ABC transporter superfamily. Macrolide exporter (TC 3.A.1.122) family. Homodimer. Part of the tripartite efflux system MacAB-TolC, which is composed of an inner membrane transporter, MacB, a periplasmic membrane fusion protein, MacA, and an outer membrane component, TolC. The complex forms a large protein conduit and can translocate molecules across both the inner and outer membranes. Interacts with MacA.

The protein resides in the cell inner membrane. Part of the tripartite efflux system MacAB-TolC. MacB is a non-canonical ABC transporter that contains transmembrane domains (TMD), which form a pore in the inner membrane, and an ATP-binding domain (NBD), which is responsible for energy generation. Confers resistance against macrolides. The chain is Macrolide export ATP-binding/permease protein MacB from Pectobacterium atrosepticum (strain SCRI 1043 / ATCC BAA-672) (Erwinia carotovora subsp. atroseptica).